Here is a 367-residue protein sequence, read N- to C-terminus: 3-dehydroquinate synthase (367 aa).

Residues 69–74, 103–107, 127–128, K140, K149, and 167–170 contribute to the NAD(+) site; these read DGEAFK, GVVGD, TT, and TLAT. E182, H245, and H262 together coordinate Zn(2+).

Belongs to the sugar phosphate cyclases superfamily. Dehydroquinate synthase family. The cofactor is Co(2+). Zn(2+) is required as a cofactor. It depends on NAD(+) as a cofactor.

The protein resides in the cytoplasm. The enzyme catalyses 7-phospho-2-dehydro-3-deoxy-D-arabino-heptonate = 3-dehydroquinate + phosphate. It participates in metabolic intermediate biosynthesis; chorismate biosynthesis; chorismate from D-erythrose 4-phosphate and phosphoenolpyruvate: step 2/7. Catalyzes the conversion of 3-deoxy-D-arabino-heptulosonate 7-phosphate (DAHP) to dehydroquinate (DHQ). The protein is 3-dehydroquinate synthase of Azotobacter vinelandii (strain DJ / ATCC BAA-1303).